Reading from the N-terminus, the 148-residue chain is Large ribosomal subunit protein bL9 (148 aa).

Belongs to the bacterial ribosomal protein bL9 family.

Functionally, binds to the 23S rRNA. In Clostridium beijerinckii (strain ATCC 51743 / NCIMB 8052) (Clostridium acetobutylicum), this protein is Large ribosomal subunit protein bL9.